Reading from the N-terminus, the 503-residue chain is Maturase K (503 aa).

Belongs to the intron maturase 2 family. MatK subfamily.

The protein localises to the plastid. It localises to the chloroplast. Its function is as follows. Usually encoded in the trnK tRNA gene intron. Probably assists in splicing its own and other chloroplast group II introns. This is Maturase K from Rosa carolina (Pasture rose).